The chain runs to 130 residues: Putative protein ZNF815 (130 aa).

In Homo sapiens (Human), this protein is Putative protein ZNF815 (ZNF815P).